The chain runs to 34 residues: Sperm protein EM1 (34 aa).

Positions A1–S17 are enriched in basic residues. The disordered stretch occupies residues A1 to R34. A run of 7 repeats spans residues S3–K4, S5–R6, S7–R8, S9–R10, S11–R12, S13–R14, and S15–K16. A 7 X 2 AA tandem repeats of S-[KR] region spans residues S3–K16. Positions P18–R34 are enriched in low complexity.

As to expression, sperm.

The protein resides in the nucleus. This is Sperm protein EM1 from Ensis minor (Razor shell).